Here is a 264-residue protein sequence, read N- to C-terminus: Thymidylate synthase (264 aa).

Residue R21 participates in dUMP binding. H51 provides a ligand contact to (6R)-5,10-methylene-5,6,7,8-tetrahydrofolate. 126–127 is a dUMP binding site; the sequence is RR. Residue C146 is the Nucleophile of the active site. Residues 166-169, N177, and 207-209 each bind dUMP; these read RSCD and HLY. D169 is a (6R)-5,10-methylene-5,6,7,8-tetrahydrofolate binding site. A263 provides a ligand contact to (6R)-5,10-methylene-5,6,7,8-tetrahydrofolate.

The protein belongs to the thymidylate synthase family. Bacterial-type ThyA subfamily. Homodimer.

Its subcellular location is the cytoplasm. The enzyme catalyses dUMP + (6R)-5,10-methylene-5,6,7,8-tetrahydrofolate = 7,8-dihydrofolate + dTMP. It functions in the pathway pyrimidine metabolism; dTTP biosynthesis. Catalyzes the reductive methylation of 2'-deoxyuridine-5'-monophosphate (dUMP) to 2'-deoxythymidine-5'-monophosphate (dTMP) while utilizing 5,10-methylenetetrahydrofolate (mTHF) as the methyl donor and reductant in the reaction, yielding dihydrofolate (DHF) as a by-product. This enzymatic reaction provides an intracellular de novo source of dTMP, an essential precursor for DNA biosynthesis. This is Thymidylate synthase from Shewanella sp. (strain MR-4).